A 379-amino-acid polypeptide reads, in one-letter code: NADH-quinone oxidoreductase subunit D 1 (379 aa).

The protein belongs to the complex I 49 kDa subunit family. As to quaternary structure, NDH-1 is composed of 14 different subunits. Subunits NuoB, C, D, E, F, and G constitute the peripheral sector of the complex.

The protein localises to the cell inner membrane. The catalysed reaction is a quinone + NADH + 5 H(+)(in) = a quinol + NAD(+) + 4 H(+)(out). In terms of biological role, NDH-1 shuttles electrons from NADH, via FMN and iron-sulfur (Fe-S) centers, to quinones in the respiratory chain. The immediate electron acceptor for the enzyme in this species is believed to be ubiquinone. Couples the redox reaction to proton translocation (for every two electrons transferred, four hydrogen ions are translocated across the cytoplasmic membrane), and thus conserves the redox energy in a proton gradient. The protein is NADH-quinone oxidoreductase subunit D 1 of Anaeromyxobacter sp. (strain K).